A 219-amino-acid chain; its full sequence is Small ribosomal subunit protein uS5 (219 aa).

The tract at residues 1 to 32 (MSHPQSRPGGRDGRPRRRREPREEAPWVPKTA) is disordered. Residues 68 to 131 (LKTEVVDVGI…NQALLNVGPI (64 aa)) form the S5 DRBM domain.

It belongs to the universal ribosomal protein uS5 family. As to quaternary structure, part of the 30S ribosomal subunit. Contacts protein S4.

With S4 and S12 plays an important role in translational accuracy. The protein is Small ribosomal subunit protein uS5 (rps5) of Cenarchaeum symbiosum (strain A).